The following is a 312-amino-acid chain: Methionyl-tRNA formyltransferase (312 aa).

109-112 (SLLP) is a (6S)-5,6,7,8-tetrahydrofolate binding site.

It belongs to the Fmt family.

It carries out the reaction L-methionyl-tRNA(fMet) + (6R)-10-formyltetrahydrofolate = N-formyl-L-methionyl-tRNA(fMet) + (6S)-5,6,7,8-tetrahydrofolate + H(+). Functionally, attaches a formyl group to the free amino group of methionyl-tRNA(fMet). The formyl group appears to play a dual role in the initiator identity of N-formylmethionyl-tRNA by promoting its recognition by IF2 and preventing the misappropriation of this tRNA by the elongation apparatus. This is Methionyl-tRNA formyltransferase from Nitrosospira multiformis (strain ATCC 25196 / NCIMB 11849 / C 71).